Reading from the N-terminus, the 510-residue chain is DNA nucleotidylexotransferase (510 aa).

The Nuclear localization signal motif lies at 11–17 (PRRKQPK). Positions 27-124 (KYDIKFKDIA…QPVEIERKHR (98 aa)) constitute a BRCT domain. The segment at 254-258 (VGLRT) is involved in DNA binding. Residues 329–334 (GFRRGN) and 338–341 (HDVD) each bind a 2'-deoxyribonucleoside 5'-triphosphate. The Mg(2+) site is built by D339, D341, and D434. A 2'-deoxyribonucleoside 5'-triphosphate is bound at residue 449 to 450 (GW).

Belongs to the DNA polymerase type-X family. The cofactor is Mg(2+).

It is found in the nucleus. It catalyses the reaction DNA(n) + a 2'-deoxyribonucleoside 5'-triphosphate = DNA(n+1) + diphosphate. Functionally, template-independent DNA polymerase which catalyzes the random addition of deoxynucleoside 5'-triphosphate to the 3'-end of a DNA initiator. One of the in vivo functions of this enzyme is the addition of nucleotides at the junction (N region) of rearranged Ig heavy chain and T-cell receptor gene segments during the maturation of B- and T-cells. The sequence is that of DNA nucleotidylexotransferase (DNTT) from Ambystoma mexicanum (Axolotl).